The chain runs to 448 residues: Glucose-6-phosphate isomerase (448 aa).

Residue Glu-290 is the Proton donor of the active site. Residues His-311 and Lys-425 contribute to the active site.

The protein belongs to the GPI family.

It is found in the cytoplasm. The enzyme catalyses alpha-D-glucose 6-phosphate = beta-D-fructose 6-phosphate. It functions in the pathway carbohydrate biosynthesis; gluconeogenesis. The protein operates within carbohydrate degradation; glycolysis; D-glyceraldehyde 3-phosphate and glycerone phosphate from D-glucose: step 2/4. In terms of biological role, catalyzes the reversible isomerization of glucose-6-phosphate to fructose-6-phosphate. The protein is Glucose-6-phosphate isomerase of Latilactobacillus sakei subsp. sakei (strain 23K) (Lactobacillus sakei subsp. sakei).